Reading from the N-terminus, the 335-residue chain is MAAQNNQEVDALVEKITGLHAAIAKLPSLSPSPDVDALFTELVTACVPPSPVDVTKLGPEAQEMREGLIRLCSEAEGKLEAHYSDMLAAFDKPLDHLGMFPYYNNYINLSKLEYELLARYVPGGYRPARVAFIGSGPLPFSSFVLAARHLPDTMFDNYDLCGAANDRASKLFRADRDVGARMSFHTADVADLAGELAKYDVVFLAALVGMAAEDKAKVIAHLGAHMADGAALVVRSAHGARGFLYPIVDPQDIGRGGFEVLAVCHPDDDVVNSVIIAQKSKDVHADGLGSGRGAGGQYARGTVPVVSPPCRFGEMVADVTQNHKRDEFANAEVAF.

This sequence belongs to the nicotianamine synthase (NAS)-like family.

It catalyses the reaction 3 S-adenosyl-L-methionine = nicotianamine + 3 S-methyl-5'-thioadenosine + 3 H(+). In terms of biological role, synthesizes nicotianamine, a polyamine that is the first intermediate in the synthesis of the phytosiderophores of the mugineic acid type found in gramineae which serves as a sensor for the physiological iron status within the plant, and/or might be involved in the transport of iron. This Hordeum vulgare (Barley) protein is Probable nicotianamine synthase 2 (NAS2).